We begin with the raw amino-acid sequence, 133 residues long: Profilin Sal k 4.0201 (133 aa).

Residues cysteine 95 and cysteine 117 are joined by a disulfide bond.

It belongs to the profilin family. As to quaternary structure, occurs in many kinds of cells as a complex with monomeric actin in a 1:1 ratio. As to expression, expressed in pollen (at protein and mRNA level).

It is found in the cytoplasm. The protein resides in the cytoskeleton. Functionally, binds to actin and affects the structure of the cytoskeleton. At high concentrations, profilin prevents the polymerization of actin, whereas it enhances it at low concentrations. The polypeptide is Profilin Sal k 4.0201 (Kali turgidum (Prickly saltwort)).